The chain runs to 176 residues: Putative metal-dependent hydrolase BLi00869/BLi00870/BL03027 (176 aa).

Residues His65, His158, and His162 each coordinate Zn(2+).

Belongs to the metal hydrolase YfiT family. As to quaternary structure, homodimer. It depends on Zn(2+) as a cofactor.

The protein localises to the cytoplasm. Functionally, possible metal-dependent hydrolase. The chain is Putative metal-dependent hydrolase BLi00869/BLi00870/BL03027 from Bacillus licheniformis (strain ATCC 14580 / DSM 13 / JCM 2505 / CCUG 7422 / NBRC 12200 / NCIMB 9375 / NCTC 10341 / NRRL NRS-1264 / Gibson 46).